The primary structure comprises 432 residues: MDQFLITGRSRIAGEVTISGAKNAALPLLAAMILAETPTTLNNVPSLQDVRTLIKLIAGLGIRIEKQGDTVTCDTSTIENYFAPYELVKTMRASILVLGPLLARFGEAEVSLPGGCAIGSRPVDQHLKAFKAMGAEITVENGYVKARAPEGGRLIGCEFSFDMVTVGGTENVLIAATLAKGTTVLENCAREPEVVDLANMLVAMGAKVSGIGTATLTIEGVDSLQGCEYSVVPDRIETGSYLAGALMTEGDVTTKNTDPALLQPVLQKFEEMGAIITTGDDWIRAQMTGRPKPVDIRTQPHPGFPTDMQAQLMAVCCLAEGTSTISENIFENRYMHVPELKRMGADIQVDGHTAIIRGVDSFNAAPVMATDLRASMSLVMAAAAAEGETLIDRIYHIDRGYENVEEKLRGLGVNIERVNPVTDAAEADSLDD.

22–23 (KN) serves as a coordination point for phosphoenolpyruvate. Arg92 provides a ligand contact to UDP-N-acetyl-alpha-D-glucosamine. The active-site Proton donor is Cys116. Residue Cys116 is modified to 2-(S-cysteinyl)pyruvic acid O-phosphothioketal. Residues 121–125 (RPVDQ), Asp307, and Ile329 each bind UDP-N-acetyl-alpha-D-glucosamine.

The protein belongs to the EPSP synthase family. MurA subfamily.

Its subcellular location is the cytoplasm. It catalyses the reaction phosphoenolpyruvate + UDP-N-acetyl-alpha-D-glucosamine = UDP-N-acetyl-3-O-(1-carboxyvinyl)-alpha-D-glucosamine + phosphate. Its pathway is cell wall biogenesis; peptidoglycan biosynthesis. Functionally, cell wall formation. Adds enolpyruvyl to UDP-N-acetylglucosamine. The chain is UDP-N-acetylglucosamine 1-carboxyvinyltransferase from Psychrobacter sp. (strain PRwf-1).